Reading from the N-terminus, the 484-residue chain is Monocarboxylate transporter 2 (484 aa).

At 1–16 (MPSETAVPPPHPIPPD) the chain is on the cytoplasmic side. Residues 17 to 37 (GGWGWVVVGAAFISIGFSYAF) traverse the membrane as a helical segment. Residues 38-60 (PKAVTVFFKDIQQIFQASYSEIA) lie on the Extracellular side of the membrane. A helical membrane pass occupies residues 61–81 (WISSIMLAVMYAGGPISSVLV). Topologically, residues 82–87 (NNYGSR) are cytoplasmic. Residues 88–108 (PVVIIGGLLCCTGMILASFSN) form a helical membrane-spanning segment. The Extracellular portion of the chain corresponds to 109-116 (SVLELYLT). Residues 117-137 (IGFIGGLGLAFNLQPALTIIG) traverse the membrane as a helical segment. Residues 138–144 (KYFYRRR) are Cytoplasmic-facing. Residues 145–165 (PMANGLAMAGSPVFLSSLAPF) form a helical membrane-spanning segment. Over 166-174 (NQYLFNSYG) the chain is Extracellular. Residues 175–195 (WKGSFLILGGIFLHSCVAGCL) traverse the membrane as a helical segment. Topologically, residues 196-245 (MRPVQTSPRKSKSKSKVGSRQDGSMKKASKVSTAEKINRFLDFSLFKHRG) are cytoplasmic. The interval 201–224 (TSPRKSKSKSKVGSRQDGSMKKAS) is disordered. Residues 246-266 (FLIYLSGNVIMFLGFFAPIIF) form a helical membrane-spanning segment. At 267 to 282 (LAPYAKDKGVDEYNAA) the chain is on the extracellular side. A helical transmembrane segment spans residues 283–303 (LLLSVMAFVDMFARPTGGLIA). The Cytoplasmic portion of the chain corresponds to 304–311 (NSKLIRPR). The chain crosses the membrane as a helical span at residues 312 to 332 (IQYFFSFAIVFTGICHLLCPL). The Extracellular portion of the chain corresponds to 333-337 (ADTYP). Residues 338–358 (ALVVYSIFFGYGFGSVSSVLF) form a helical membrane-spanning segment. The Cytoplasmic segment spans residues 359–372 (ETLMDLVGPARFSS). The helical transmembrane segment at 373–393 (AVGLATIVECCPVLLGPPLAG) threads the bilayer. Residues 394–405 (KLVDKTKDYKYM) are Extracellular-facing. The helical transmembrane segment at 406–426 (YIASGTIVVISGIYLFIGNAI) threads the bilayer. Residues 427 to 484 (NYRLLAKERKREKARKKKSATHPSRESEALSRSKQDDVSVKVSNPHNSPSDRERESNI) are Cytoplasmic-facing. Residues 437–484 (REKARKKKSATHPSRESEALSRSKQDDVSVKVSNPHNSPSDRERESNI) form a disordered region. Basic and acidic residues-rich tracts occupy residues 449 to 465 (PSRE…DDVS) and 475 to 484 (PSDRERESNI).

This sequence belongs to the major facilitator superfamily. Monocarboxylate porter (TC 2.A.1.13) family. As to quaternary structure, homodimer. Interacts with GRID2IP. Interacts with EMB; interaction mediates SLC16A7 targeting to the plasma membrane. Interacts with isoform 2 of BSG. In terms of tissue distribution, abundant on the surface of hepatocytes. Present on parietal cells of the oxyntic gland of the stomach, on the basolateral surface of epithelial cells in the collecting ducts of the kidney, on sperm tails throughout the epididymis. Expressed in mitochondria-rich skeletal muscle fibers and cardiac myocytes (at protein level).

It localises to the cell membrane. Its subcellular location is the basolateral cell membrane. The protein resides in the cytoplasm. It carries out the reaction pyruvate(out) + H(+)(out) = pyruvate(in) + H(+)(in). It catalyses the reaction 3-methyl-2-oxobutanoate(out) + H(+)(out) = 3-methyl-2-oxobutanoate(in) + H(+)(in). The catalysed reaction is (S)-lactate(in) + H(+)(in) = (S)-lactate(out) + H(+)(out). The enzyme catalyses acetoacetate(out) + H(+)(out) = acetoacetate(in) + H(+)(in). It carries out the reaction (R)-3-hydroxybutanoate(out) + H(+)(out) = (R)-3-hydroxybutanoate(in) + H(+)(in). It catalyses the reaction 4-methyl-2-oxopentanoate(out) + H(+)(out) = 4-methyl-2-oxopentanoate(in) + H(+)(in). The catalysed reaction is (S)-3-hydroxybutanoate(out) + H(+)(out) = (S)-3-hydroxybutanoate(in) + H(+)(in). Transport activity exhibits steep dependence on substrate concentration. Substrate concentration sensitivity of SLC16A7 arises from the strong inter-subunit cooperativity of the SLC16A7 dimer during transport. Inhibited by AR-C155858. Functionally, proton-coupled monocarboxylate symporter. Catalyzes the rapid transport across the plasma membrane of monocarboxylates such as L-lactate, pyruvate and ketone bodies, acetoacetate, beta-hydroxybutyrate and acetate. Dimerization is functionally required and both subunits work cooperatively in transporting substrate. The protein is Monocarboxylate transporter 2 (SLC16A7) of Mesocricetus auratus (Golden hamster).